The sequence spans 330 residues: Probable inactive heme oxygenase 2, chloroplastic (330 aa).

Low complexity-rich tracts occupy residues 1–13 and 56–69; these read MPLAAAVAASAVV and AAEAEAEAVAVDEA. Disordered stretches follow at residues 1–27, 50–82, and 107–156; these read MPLAAAVAASAVVPPRPPPPPPRRARP, PSPPAPAAEAEAEAVAVDEAPPAKPRPRRYPRQ, and TTLK…LEGE. Residues 1-47 constitute a chloroplast transit peptide; the sequence is MPLAAAVAASAVVPPRPPPPPPRRARPLRSFTGLILTRDLAALTVAR. Positions 114-151 are enriched in acidic residues; it reads TGAEEEVGDGVSEDASASEEEEEEEDDDDVVEEEEEGA.

The protein belongs to the heme oxygenase family.

It localises to the plastid. The protein resides in the chloroplast. In terms of biological role, probable inactive heme oxygenase that may play a role in the regulation of phytochrome assembly and photomorphogenesis. This chain is Probable inactive heme oxygenase 2, chloroplastic (HO2), found in Oryza sativa subsp. japonica (Rice).